The primary structure comprises 1099 residues: 1-phosphatidylinositol 4,5-bisphosphate phosphodiesterase 1 (1099 aa).

Over residues 1–10 (MLESLNRRNS) the composition is skewed to basic and acidic residues. Disordered regions lie at residues 1–109 (MLES…SSTT) and 128–164 (ESRS…KSIQ). 2 stretches are compositionally biased toward low complexity: residues 43-66 (PPKS…KSDL) and 86-109 (PKQQ…SSTT). A compositionally biased stretch (polar residues) spans 131–141 (SIVSNNGGSPM). Residues 142 to 155 (SDSTTVTSTLSTDT) are compositionally biased toward low complexity. One can recognise a PI-PLC X-box domain in the interval 566–726 (YDYPLNEYFI…LKHKFIIKVK (161 aa)). Active-site residues include His-579 and His-642. Substrate is bound by residues Lys-724 and Lys-726. The segment at 742–780 (FTTSTTTTTTTTTTTTTATSLSEDNENNKSNSSSTSSFI) is disordered. A compositionally biased stretch (low complexity) spans 743 to 778 (TTSTTTTTTTTTTTTTATSLSEDNENNKSNSSSTSS). One can recognise a PI-PLC Y-box domain in the interval 794 to 912 (ELSNLGIYTQ…GYVLKPSVLR (119 aa)). Substrate-binding residues include Ser-823 and Arg-852. A C2 domain is found at 917-1071 (KSSSSNVDTR…QGYRYIYLND (155 aa)).

The catalysed reaction is a 1,2-diacyl-sn-glycero-3-phospho-(1D-myo-inositol-4,5-bisphosphate) + H2O = 1D-myo-inositol 1,4,5-trisphosphate + a 1,2-diacyl-sn-glycerol + H(+). Functionally, the production of the second messenger molecules diacylglycerol (DAG) and inositol 1,4,5-trisphosphate (IP3) is mediated by activated phosphatidylinositol-specific phospholipase C enzymes. This is 1-phosphatidylinositol 4,5-bisphosphate phosphodiesterase 1 (PLC1) from Candida albicans (Yeast).